The following is a 300-amino-acid chain: Probable ABC transporter permease protein YurM (300 aa).

The next 6 helical transmembrane spans lie at 37–57 (VWVFLFLYLIAIAYPLLWMVM), 98–118 (VIVTALTCVITVFISAWAAYG), 129–149 (FFLVLCLGGLMLTPQVSLVPL), 161–181 (TYWALILPYAAYRIPFTIILI), 204–224 (FGVFFRIFLPMSVPILVTSGI), and 264–284 (WGVLLAGLTISAAPIIILFLL). The region spanning 94-285 (FMNSVIVTAL…APIIILFLLM (192 aa)) is the ABC transmembrane type-1 domain.

It belongs to the binding-protein-dependent transport system permease family. MalFG subfamily.

Its subcellular location is the cell membrane. Functionally, probably part of the binding-protein-dependent transport system YurMNO. Probably responsible for the translocation of the substrate across the membrane. The sequence is that of Probable ABC transporter permease protein YurM (yurM) from Bacillus subtilis (strain 168).